A 330-amino-acid polypeptide reads, in one-letter code: Methionyl-tRNA formyltransferase (330 aa).

Position 116 to 119 (serine 116 to proline 119) interacts with (6S)-5,6,7,8-tetrahydrofolate.

This sequence belongs to the Fmt family.

It catalyses the reaction L-methionyl-tRNA(fMet) + (6R)-10-formyltetrahydrofolate = N-formyl-L-methionyl-tRNA(fMet) + (6S)-5,6,7,8-tetrahydrofolate + H(+). Attaches a formyl group to the free amino group of methionyl-tRNA(fMet). The formyl group appears to play a dual role in the initiator identity of N-formylmethionyl-tRNA by promoting its recognition by IF2 and preventing the misappropriation of this tRNA by the elongation apparatus. The protein is Methionyl-tRNA formyltransferase of Nitratidesulfovibrio vulgaris (strain DP4) (Desulfovibrio vulgaris).